The sequence spans 794 residues: PAN2-PAN3 deadenylation complex subunit PAN3 (794 aa).

A C3H1-type zinc finger spans residues 7–36; that stretch reads SAKDVLCKNILIYGYCKFQDKGCAFSHNKQ. 2 disordered regions span residues 40–97 and 187–226; these read PQQQ…TQSK and AQVG…QQQL. 2 stretches are compositionally biased toward polar residues: residues 83–94 and 189–199; these read IQSNGMVNSQET and VGNNPGSTAPA. Positions 200–226 are enriched in low complexity; that stretch reads NLQLQQKQPQQPQQPQQPQQHQQQQQL. Positions 372–668 are pseudokinase domain; it reads QTMQHLSLPD…MDQFILQYIS (297 aa). ATP is bound by residues R425 and 494–501; that span reads DYYPNLTT. A coiled-coil region spans residues 669–707; sequence SHFMTLMNKLQNSHDWVELQLSTELENARLFRLMTKINF. The interval 708-794 is knob domain; the sequence is IISEMPTYDL…IDTQFRLLRG (87 aa).

Belongs to the protein kinase superfamily. PAN3 family. In terms of assembly, homodimer. Forms a heterotrimer with a catalytic subunit PAN2 to form the poly(A)-nuclease (PAN) deadenylation complex. Interacts (via PAM-2 motif) with poly(A)-binding protein PAB1 (via PABC domain), conferring substrate specificity of the enzyme complex.

It localises to the cytoplasm. In terms of biological role, regulatory subunit of the poly(A)-nuclease (PAN) deadenylation complex, one of two cytoplasmic mRNA deadenylases involved in mRNA turnover. PAN specifically shortens poly(A) tails of RNA and the activity is stimulated by poly(A)-binding protein PAB1. PAN deadenylation is followed by rapid degradation of the shortened mRNA tails by the CCR4-NOT complex. Deadenylated mRNAs are then degraded by two alternative mechanisms, namely exosome-mediated 3'-5' exonucleolytic degradation, or deadenylation-dependent mRNA decaping and subsequent 5'-3' exonucleolytic degradation by XRN1. May also be involved in post-transcriptional maturation of mRNA poly(A) tails. PAN3 acts as a positive regulator for PAN activity, recruiting the catalytic subunit PAN2 to mRNA via its interaction with RNA and with PAB1. This chain is PAN2-PAN3 deadenylation complex subunit PAN3, found in Lodderomyces elongisporus (strain ATCC 11503 / CBS 2605 / JCM 1781 / NBRC 1676 / NRRL YB-4239) (Yeast).